A 299-amino-acid chain; its full sequence is Nucleotide-binding protein DIP1313 (299 aa).

ATP is bound at residue 22 to 29 (GLSGAGLS). 73 to 76 (DVRS) contributes to the GTP binding site.

This sequence belongs to the RapZ-like family.

Its function is as follows. Displays ATPase and GTPase activities. This Corynebacterium diphtheriae (strain ATCC 700971 / NCTC 13129 / Biotype gravis) protein is Nucleotide-binding protein DIP1313.